Reading from the N-terminus, the 359-residue chain is Protein RecA (359 aa).

77–84 (GPESSGKT) is an ATP binding site.

Belongs to the RecA family.

It localises to the cytoplasm. Its function is as follows. Can catalyze the hydrolysis of ATP in the presence of single-stranded DNA, the ATP-dependent uptake of single-stranded DNA by duplex DNA, and the ATP-dependent hybridization of homologous single-stranded DNAs. It interacts with LexA causing its activation and leading to its autocatalytic cleavage. The chain is Protein RecA from Paramagnetospirillum magneticum (strain ATCC 700264 / AMB-1) (Magnetospirillum magneticum).